A 102-amino-acid chain; its full sequence is Fe-S protein maturation auxiliary factor YitW (102 aa).

This sequence belongs to the MIP18 family.

In terms of biological role, involved in the maturation of iron-sulfur (Fe-S) proteins. May function as a Fe-S cluster carrier. The polypeptide is Fe-S protein maturation auxiliary factor YitW (yitW) (Bacillus subtilis (strain 168)).